The primary structure comprises 309 residues: Peptidyl-prolyl cis-trans isomerase 9 (309 aa).

The region spanning 8 to 173 (FLDISVDENL…AKVLISNCGE (166 aa)) is the PPIase cyclophilin-type domain. Basic and acidic residues-rich tracts occupy residues 217–229 (NEKKHEMRNDKRR), 239–265 (RSHEKNRDYKKENRGDSSRSQPRRDEN), 280–289 (ERSATPEHWR), and 296–309 (WVHDSHKHPEEDLV). The tract at residues 217-309 (NEKKHEMRND…SHKHPEEDLV (93 aa)) is disordered.

Belongs to the cyclophilin-type PPIase family. Co-expressed with pdi-1 in the syncytial hypodermis.

The catalysed reaction is [protein]-peptidylproline (omega=180) = [protein]-peptidylproline (omega=0). Functionally, PPIases accelerate the folding of proteins. It catalyzes the cis-trans isomerization of proline imidic peptide bonds in oligopeptides. Thought to function as a catalyst in the folding and modification of cuticle collagens. This chain is Peptidyl-prolyl cis-trans isomerase 9 (cyn-9), found in Caenorhabditis elegans.